Reading from the N-terminus, the 442-residue chain is Asparagine--tRNA ligase (442 aa).

Belongs to the class-II aminoacyl-tRNA synthetase family. In terms of assembly, homodimer.

The protein localises to the cytoplasm. It catalyses the reaction tRNA(Asn) + L-asparagine + ATP = L-asparaginyl-tRNA(Asn) + AMP + diphosphate + H(+). In Koribacter versatilis (strain Ellin345), this protein is Asparagine--tRNA ligase.